We begin with the raw amino-acid sequence, 303 residues long: Albumin b-32 (303 aa).

The span at Ala-112–Arg-137 shows a compositional bias: low complexity. Positions Ala-112–Asp-175 are disordered. Over residues Ala-146–Gly-156 the composition is skewed to basic and acidic residues.

It belongs to the ribosome-inactivating protein family. Type 1 RIP subfamily. In terms of assembly, monomer. In terms of tissue distribution, endosperm.

The protein localises to the cytoplasm. It carries out the reaction Endohydrolysis of the N-glycosidic bond at one specific adenosine on the 28S rRNA.. Functionally, a possible regulatory factor for the synthesis of zeins, the major group of storage proteins. In Zea mays (Maize), this protein is Albumin b-32 (O6).